The primary structure comprises 133 residues: UPF0292 protein TGAM_1777 (133 aa).

Positions Glu20–Leu100 constitute a Toprim domain. Glu26, Asp69, and Asp71 together coordinate Mg(2+).

This sequence belongs to the UPF0292 family. Requires Mg(2+) as cofactor.

The sequence is that of UPF0292 protein TGAM_1777 from Thermococcus gammatolerans (strain DSM 15229 / JCM 11827 / EJ3).